A 290-amino-acid polypeptide reads, in one-letter code: Transcription cofactor vestigial-like protein 4 (290 aa).

An N-acetylmethionine modification is found at Met1. Residues 17–30 show a composition bias toward basic and acidic residues; the sequence is ADDEKREAALRGEP. Disordered stretches follow at residues 17 to 65, 85 to 106, 140 to 161, and 254 to 290; these read ADDE…PGDE, LNKT…SPIE, LDAS…QQNR, and AAKD…SVVS. Ser52 carries the phosphoserine modification. The segment covering 92-105 has biased composition (basic and acidic residues); sequence DCRRDPRERSRSPI. The residue at position 149 (Ser149) is a Phosphoserine. The span at 150–161 shows a compositional bias: polar residues; the sequence is PTLTPGERQQNR. Phosphothreonine is present on Thr153. The span at 272-290 shows a compositional bias: low complexity; that stretch reads PASPSAHMVSHSHSPSVVS. Ser274 bears the Phosphoserine mark.

It belongs to the vestigial family. In terms of assembly, interacts with TEFs. Interacts with IRF2BP2.

It localises to the nucleus. In terms of biological role, may act as a specific coactivator for the mammalian TEFs. The sequence is that of Transcription cofactor vestigial-like protein 4 from Homo sapiens (Human).